A 91-amino-acid chain; its full sequence is Ice-structuring protein 2A7 (91 aa).

Residues 1-21 (MALSLFTVGQLIFLFWTMRIT) form the signal peptide. The propeptide at 22–39 (EANPDPAAKAVPAAAAPD) is removed by a dipeptidylpeptidase.

The protein belongs to the type-I AFP family. As to expression, detected in blood serum (at protein level).

The protein localises to the secreted. Functionally, contributes to protect fish blood from freezing at subzero sea water temperatures. Lowers the blood freezing point. Binds to nascent ice crystals and prevents further growth. In Pseudopleuronectes americanus (Winter flounder), this protein is Ice-structuring protein 2A7.